The sequence spans 207 residues: Glycerol-3-phosphate acyltransferase (207 aa).

The next 6 membrane-spanning stretches (helical) occupy residues 7-27 (YALAAVAGYLSGSIPFGLVIV), 58-78 (LATFLLDSLKAGLVALAFTLL), 83-103 (VGFVAGFAAFIGHCYPVWLGF), 116-136 (LAFVSPLHGLVVAAPVWLGLF), 141-161 (ISSLAALTAAVAVPPGAWLMG), and 166-186 (LILAGLALLSVFVFWTHRENI).

It belongs to the PlsY family. As to quaternary structure, probably interacts with PlsX.

It is found in the cell inner membrane. It catalyses the reaction an acyl phosphate + sn-glycerol 3-phosphate = a 1-acyl-sn-glycero-3-phosphate + phosphate. The protein operates within lipid metabolism; phospholipid metabolism. Its function is as follows. Catalyzes the transfer of an acyl group from acyl-phosphate (acyl-PO(4)) to glycerol-3-phosphate (G3P) to form lysophosphatidic acid (LPA). This enzyme utilizes acyl-phosphate as fatty acyl donor, but not acyl-CoA or acyl-ACP. This Hyphomonas neptunium (strain ATCC 15444) protein is Glycerol-3-phosphate acyltransferase.